The primary structure comprises 535 residues: Formate--tetrahydrofolate ligase (535 aa).

50-57 lines the ATP pocket; it reads TPAGEGKT.

This sequence belongs to the formate--tetrahydrofolate ligase family.

The catalysed reaction is (6S)-5,6,7,8-tetrahydrofolate + formate + ATP = (6R)-10-formyltetrahydrofolate + ADP + phosphate. Its pathway is one-carbon metabolism; tetrahydrofolate interconversion. This chain is Formate--tetrahydrofolate ligase, found in Picrophilus torridus (strain ATCC 700027 / DSM 9790 / JCM 10055 / NBRC 100828 / KAW 2/3).